Reading from the N-terminus, the 223-residue chain is Golgi SNAP receptor complex member 1-1 (223 aa).

Residues 1 to 201 (MDVPSSWDAL…AAIKRKKSMD (201 aa)) lie on the Cytoplasmic side of the membrane. Residues 8–67 (DALRKQARKIEAQLDEQMHSYRRLVSTKALSKSDGNESDLEAGIDLLLRQLQQVNAQMQA) adopt a coiled-coil conformation. Residues 202–222 (TIILSLVAAVCTFLIFIYWIT) form a helical; Anchor for type IV membrane protein membrane-spanning segment. Lys-223 is a topological domain (vesicular).

The protein belongs to the GOSR1 family. In terms of assembly, component of several multiprotein Golgi SNARE complexes.

It is found in the golgi apparatus membrane. Involved in transport from the ER to the Golgi apparatus as well as in intra-Golgi transport. It belongs to a super-family of proteins called t-SNAREs or soluble NSF (N-ethylmaleimide-sensitive factor) attachment protein receptor. In Arabidopsis thaliana (Mouse-ear cress), this protein is Golgi SNAP receptor complex member 1-1 (GOS11).